Reading from the N-terminus, the 357-residue chain is Dual-specificity RNA methyltransferase RlmN (357 aa).

The active-site Proton acceptor is glutamate 89. The Radical SAM core domain maps to 109–340; the sequence is EGEKYTVCVS…CTIRESKALD (232 aa). Cysteine 116 and cysteine 345 are disulfide-bonded. The [4Fe-4S] cluster site is built by cysteine 123, cysteine 127, and cysteine 130. S-adenosyl-L-methionine contacts are provided by residues 173–174, serine 203, 226–228, and asparagine 302; these read GE and SLH. Cysteine 345 acts as the S-methylcysteine intermediate in catalysis.

Belongs to the radical SAM superfamily. RlmN family. [4Fe-4S] cluster is required as a cofactor.

The protein localises to the cytoplasm. The catalysed reaction is adenosine(2503) in 23S rRNA + 2 reduced [2Fe-2S]-[ferredoxin] + 2 S-adenosyl-L-methionine = 2-methyladenosine(2503) in 23S rRNA + 5'-deoxyadenosine + L-methionine + 2 oxidized [2Fe-2S]-[ferredoxin] + S-adenosyl-L-homocysteine. It catalyses the reaction adenosine(37) in tRNA + 2 reduced [2Fe-2S]-[ferredoxin] + 2 S-adenosyl-L-methionine = 2-methyladenosine(37) in tRNA + 5'-deoxyadenosine + L-methionine + 2 oxidized [2Fe-2S]-[ferredoxin] + S-adenosyl-L-homocysteine. Specifically methylates position 2 of adenine 2503 in 23S rRNA and position 2 of adenine 37 in tRNAs. m2A2503 modification seems to play a crucial role in the proofreading step occurring at the peptidyl transferase center and thus would serve to optimize ribosomal fidelity. The sequence is that of Dual-specificity RNA methyltransferase RlmN from Helicobacter pylori (strain P12).